The primary structure comprises 204 residues: Twist-related protein 1 (204 aa).

Residues 1–18 (MMQDVSSSPVSPADDSLS) are compositionally biased toward low complexity. Residues 1–107 (MMQDVSSSPV…GGGSPQSYEE (107 aa)) form a disordered region. The span at 34–43 (RGGRKRRSSR) shows a compositional bias: basic residues. Composition is skewed to gly residues over residues 46–65 (AGGGAGPGGAAGGGVGGGDE) and 80–101 (GCGGGGSAGGGGGGGSSSGGGS). The region spanning 110–161 (TQRVMANVRERQRTQSLNEAFAALRKIIPTLPSDKLSKIQTLKLAARYIDFL) is the bHLH domain. Positions 163–193 (QVLQSDELDSKMASCSYVAHERFSYAFSVWR) are sufficient for transactivation activity.

Efficient DNA binding requires dimerization with another bHLH protein. Homodimer or heterodimer with E proteins such as TCF3. ID1 binds preferentially to TCF3 but does not interact efficiently with TWIST1 so ID1 levels control the amount of TCF3 available to dimerize with TWIST and thus determine the type of dimer formed.

The protein resides in the nucleus. Acts as a transcriptional regulator. Inhibits myogenesis by sequestrating E proteins, inhibiting trans-activation by MEF2, and inhibiting DNA-binding by MYOD1 through physical interaction. This interaction probably involves the basic domains of both proteins. Also represses expression of pro-inflammatory cytokines such as TNFA and IL1B. Regulates cranial suture patterning and fusion. Activates transcription as a heterodimer with E proteins. Regulates gene expression differentially, depending on dimer composition. Homodimers induce expression of FGFR2 and POSTN while heterodimers repress FGFR2 and POSTN expression and induce THBS1 expression. Heterodimerization is also required for osteoblast differentiation. Represses the activity of the circadian transcriptional activator: NPAS2-BMAL1 heterodimer. The protein is Twist-related protein 1 (TWIST1) of Nomascus concolor (Black crested gibbon).